The chain runs to 84 residues: Small ribosomal subunit protein eS27 (84 aa).

The segment covering 1 to 16 (MPLAKDPLHPSPEEEK) has biased composition (basic and acidic residues). Positions 1-25 (MPLAKDPLHPSPEEEKRKHKKKRLV) are disordered. Serine 11 is modified (phosphoserine). The C4-type zinc-finger motif lies at 38 to 60 (PGCYKITTVFSHAQTVVLCVGCS).

Belongs to the eukaryotic ribosomal protein eS27 family. Component of the small ribosomal subunit. Part of the small subunit (SSU) processome, composed of more than 70 proteins and the RNA chaperone small nucleolar RNA (snoRNA) U3. Zn(2+) is required as a cofactor.

It is found in the cytoplasm. Its subcellular location is the nucleus. The protein localises to the nucleolus. Its function is as follows. Component of the small ribosomal subunit. The ribosome is a large ribonucleoprotein complex responsible for the synthesis of proteins in the cell. Required for proper rRNA processing and maturation of 18S rRNAs. Part of the small subunit (SSU) processome, first precursor of the small eukaryotic ribosomal subunit. During the assembly of the SSU processome in the nucleolus, many ribosome biogenesis factors, an RNA chaperone and ribosomal proteins associate with the nascent pre-rRNA and work in concert to generate RNA folding, modifications, rearrangements and cleavage as well as targeted degradation of pre-ribosomal RNA by the RNA exosome. This Pongo abelii (Sumatran orangutan) protein is Small ribosomal subunit protein eS27 (RPS27).